The sequence spans 253 residues: Imidazole glycerol phosphate synthase subunit HisF (253 aa).

Residues aspartate 11 and aspartate 130 contribute to the active site.

This sequence belongs to the HisA/HisF family. As to quaternary structure, heterodimer of HisH and HisF.

It localises to the cytoplasm. It carries out the reaction 5-[(5-phospho-1-deoxy-D-ribulos-1-ylimino)methylamino]-1-(5-phospho-beta-D-ribosyl)imidazole-4-carboxamide + L-glutamine = D-erythro-1-(imidazol-4-yl)glycerol 3-phosphate + 5-amino-1-(5-phospho-beta-D-ribosyl)imidazole-4-carboxamide + L-glutamate + H(+). It participates in amino-acid biosynthesis; L-histidine biosynthesis; L-histidine from 5-phospho-alpha-D-ribose 1-diphosphate: step 5/9. IGPS catalyzes the conversion of PRFAR and glutamine to IGP, AICAR and glutamate. The HisF subunit catalyzes the cyclization activity that produces IGP and AICAR from PRFAR using the ammonia provided by the HisH subunit. This is Imidazole glycerol phosphate synthase subunit HisF from Roseobacter denitrificans (strain ATCC 33942 / OCh 114) (Erythrobacter sp. (strain OCh 114)).